A 765-amino-acid chain; its full sequence is Transient receptor potential cation channel subfamily V member 6 (765 aa).

At 1–367 (MGPLQGDGGP…SLKWKRYGRP (367 aa)) the chain is on the cytoplasmic side. ANK repeat units lie at residues 84–114 (IWES…KVHQ), 118–147 (MGET…ELVF), and 156–185 (EGQT…SVSA). Residues 133-143 (EAAMVLMEAAP) are interaction with calmodulin. Tyrosine 201 is modified (phosphotyrosine; by SRC). ANK repeat units follow at residues 202-231 (FGEH…DIRA), 235-277 (LGNT…LVPN), and 279-308 (QGLT…HTQW). A helical membrane pass occupies residues 368 to 388 (YFCMLGAIYLLYIICFTMCCI). Residues 389–425 (YRPLKPRTNNRTSPRDNTLLQQKLLQEAYMTPKDDIR) are Extracellular-facing. An N-linked (GlcNAc...) asparagine glycan is attached at asparagine 398. The chain crosses the membrane as a helical span at residues 426 to 448 (LVGELVTVIGAIIILLVEVPDIF). Topologically, residues 449–463 (RMGVTRFFGQTILGG) are cytoplasmic. The helical transmembrane segment at 464-483 (PFHVLIITYAFMVLVTMVMR) threads the bilayer. At 484–489 (LISASG) the chain is on the extracellular side. Residues 490-509 (EVVPMSFALVLGWCNVMYFA) traverse the membrane as a helical segment. The Cytoplasmic portion of the chain corresponds to 510–529 (RGFQMLGPFTIMIQKMIFGD). A helical transmembrane segment spans residues 530–552 (LMRFCWLMAVVILGFASAFYIIF). The Extracellular segment spans residues 553 to 565 (QTEDPEELGHFYD). Positions 566 to 585 (YPMALFSTFELFLTIIDGPA) form an intramembrane region, pore-forming. A Selectivity filter motif is present at residues 581–585 (IDGPA). Aspartate 582 provides a ligand contact to Ca(2+). At 586–596 (NYNVDLPFMYS) the chain is on the extracellular side. A helical membrane pass occupies residues 597–617 (ITYAAFAIIATLLMLNLLIAM). Residues 618-765 (MGDTHWRVAH…EDGESWEYQI (148 aa)) are Cytoplasmic-facing. An interaction with S100A10 region spans residues 638-642 (VATTV). Residues 731–751 (SSANWERLRQGTLRRDLRGII) form an interaction with calmodulin region. Threonine 742 is subject to Phosphothreonine; by PKC/PRKCA.

This sequence belongs to the transient receptor (TC 1.A.4) family. TrpV subfamily. TRPV6 sub-subfamily. As to quaternary structure, homotetramer. Probably also forms heterotetramers with TRPV5. Interacts with TRPV5. Interacts with S100A10 and probably with the ANAX2-S100A10 heterotetramer. The interaction with S100A10 is required for the trafficking to the plasma membrane. Interacts with BSPRY. Interacts with TCAF1 and TCAF2 isoform 2. Interacts with calmodulin. Post-translationally, glycosylated. Phosphorylation at Tyr-201 by SRC leads to an increased calcium influx through the channel. Probably dephosphorylated at this site by PTPN1. Phosphorylation by PRKCA at the calmodulin binding site delays channel inactivation. As to expression, expressed at high levels in the gastrointestinal tract, including esophagus, stomach, duodenum, jejunum, ileum and colon, and in pancreas, placenta, prostate and salivary gland. Expressed at moderate levels in liver, kidney and testis. Expressed in trophoblasts of placenta villus trees (at protein level). Expressed in locally advanced prostate cancer, metastatic and androgen-insensitive prostatic lesions but not detected in healthy prostate tissue and benign prostatic hyperplasia.

It localises to the cell membrane. The enzyme catalyses Ca(2+)(in) = Ca(2+)(out). Calcium selective cation channel that mediates Ca(2+) uptake in various tissues, including the intestine. Important for normal Ca(2+) ion homeostasis in the body, including bone and skin. The channel is activated by low internal calcium level, probably including intracellular calcium store depletion, and the current exhibits an inward rectification. Inactivation includes both a rapid Ca(2+)-dependent and a slower Ca(2+)-calmodulin-dependent mechanism; the latter may be regulated by phosphorylation. In vitro, is slowly inhibited by Mg(2+) in a voltage-independent manner. Heteromeric assembly with TRPV5 seems to modify channel properties. TRPV5-TRPV6 heteromultimeric concatemers exhibit voltage-dependent gating. The polypeptide is Transient receptor potential cation channel subfamily V member 6 (TRPV6) (Homo sapiens (Human)).